Consider the following 404-residue polypeptide: Nicotinate phosphoribosyltransferase (404 aa).

His225 bears the Phosphohistidine; by autocatalysis mark.

This sequence belongs to the NAPRTase family. In terms of processing, transiently phosphorylated on a His residue during the reaction cycle. Phosphorylation strongly increases the affinity for substrates and increases the rate of nicotinate D-ribonucleotide production. Dephosphorylation regenerates the low-affinity form of the enzyme, leading to product release.

It catalyses the reaction nicotinate + 5-phospho-alpha-D-ribose 1-diphosphate + ATP + H2O = nicotinate beta-D-ribonucleotide + ADP + phosphate + diphosphate. Its pathway is cofactor biosynthesis; NAD(+) biosynthesis; nicotinate D-ribonucleotide from nicotinate: step 1/1. Its function is as follows. Catalyzes the synthesis of beta-nicotinate D-ribonucleotide from nicotinate and 5-phospho-D-ribose 1-phosphate at the expense of ATP. The sequence is that of Nicotinate phosphoribosyltransferase from Methanosarcina acetivorans (strain ATCC 35395 / DSM 2834 / JCM 12185 / C2A).